Consider the following 129-residue polypeptide: MSGSKYKPAPLATLPSTLDPAEYDVSPETRRAQVERLSIRARLKREYLLQYNDPKRVSHIEDPALIRWTYARSANIYPNFRPTPKNSLLGAVAGFGPLIFWYYVFKTDRDRKERLIQEGKLDRKFNISY.

Ser-2 carries the N-acetylserine modification. Phosphoserine is present on Ser-26. A helical transmembrane segment spans residues 88–105 (LLGAVAGFGPLIFWYYVF).

The protein belongs to the complex I NDUFB4 subunit family. Complex I is composed of 45 different subunits.

The protein resides in the mitochondrion inner membrane. Functionally, accessory subunit of the mitochondrial membrane respiratory chain NADH dehydrogenase (Complex I), that is believed not to be involved in catalysis. Complex I functions in the transfer of electrons from NADH to the respiratory chain. The immediate electron acceptor for the enzyme is believed to be ubiquinone. This Mus musculus (Mouse) protein is NADH dehydrogenase [ubiquinone] 1 beta subcomplex subunit 4 (Ndufb4).